A 492-amino-acid chain; its full sequence is Catalase (492 aa).

Catalysis depends on residues histidine 65 and asparagine 138. Tyrosine 348 serves as a coordination point for heme.

The protein belongs to the catalase family. As to quaternary structure, homotetramer. It depends on heme as a cofactor.

It localises to the cytoplasm. The protein localises to the cytosol. Its subcellular location is the peroxisome matrix. The catalysed reaction is 2 H2O2 = O2 + 2 H2O. Functionally, catalyzes the degradation of hydrogen peroxide (H(2)O(2)) generated by peroxisomal oxidases to water and oxygen, thereby protecting cells from the toxic effects of hydrogen peroxide. The sequence is that of Catalase from Vigna radiata var. radiata (Mung bean).